Reading from the N-terminus, the 475-residue chain is Ribulose bisphosphate carboxylase large chain (475 aa).

Residues 1-2 (MS) constitute a propeptide that is removed on maturation. Position 3 is an N-acetylproline (Pro3). Lys14 is subject to N6,N6,N6-trimethyllysine. 2 residues coordinate substrate: Asn123 and Thr173. Residue Lys175 is the Proton acceptor of the active site. Lys177 contacts substrate. 3 residues coordinate Mg(2+): Lys201, Asp203, and Glu204. An N6-carboxylysine modification is found at Lys201. The active-site Proton acceptor is His294. Substrate is bound by residues Arg295, His327, and Ser379.

It belongs to the RuBisCO large chain family. Type I subfamily. As to quaternary structure, heterohexadecamer of 8 large chains and 8 small chains; disulfide-linked. The disulfide link is formed within the large subunit homodimers. It depends on Mg(2+) as a cofactor. The disulfide bond which can form in the large chain dimeric partners within the hexadecamer appears to be associated with oxidative stress and protein turnover.

Its subcellular location is the plastid. The protein resides in the chloroplast. It catalyses the reaction 2 (2R)-3-phosphoglycerate + 2 H(+) = D-ribulose 1,5-bisphosphate + CO2 + H2O. The enzyme catalyses D-ribulose 1,5-bisphosphate + O2 = 2-phosphoglycolate + (2R)-3-phosphoglycerate + 2 H(+). Its function is as follows. RuBisCO catalyzes two reactions: the carboxylation of D-ribulose 1,5-bisphosphate, the primary event in carbon dioxide fixation, as well as the oxidative fragmentation of the pentose substrate in the photorespiration process. Both reactions occur simultaneously and in competition at the same active site. The sequence is that of Ribulose bisphosphate carboxylase large chain from Plumbago auriculata (Cape leadwort).